A 190-amino-acid polypeptide reads, in one-letter code: Ribosome maturation factor RimP (190 aa).

Residues 159 to 190 (ELELAGGIPEGRVAPADADASEDEEVVEGLDK) are disordered. Positions 177–190 (DASEDEEVVEGLDK) are enriched in acidic residues.

The protein belongs to the RimP family.

The protein localises to the cytoplasm. Functionally, required for maturation of 30S ribosomal subunits. In Rhodococcus opacus (strain B4), this protein is Ribosome maturation factor RimP.